The primary structure comprises 355 residues: Histidinol-phosphate aminotransferase (355 aa).

K211 is subject to N6-(pyridoxal phosphate)lysine.

Belongs to the class-II pyridoxal-phosphate-dependent aminotransferase family. Histidinol-phosphate aminotransferase subfamily. Homodimer. Requires pyridoxal 5'-phosphate as cofactor.

It carries out the reaction L-histidinol phosphate + 2-oxoglutarate = 3-(imidazol-4-yl)-2-oxopropyl phosphate + L-glutamate. It functions in the pathway amino-acid biosynthesis; L-histidine biosynthesis; L-histidine from 5-phospho-alpha-D-ribose 1-diphosphate: step 7/9. This chain is Histidinol-phosphate aminotransferase, found in Aeromonas salmonicida (strain A449).